The chain runs to 850 residues: Lon protease (850 aa).

The 195-residue stretch at 38-232 (LPVLPLRDVV…LLVGLVDGEI (195 aa)) folds into the Lon N-terminal domain. 384 to 391 (GPPGVGKT) serves as a coordination point for ATP. The Lon proteolytic domain occupies 634–815 (ENEIGLVTGL…DEVLDLALER (182 aa)). Active-site residues include S721 and K764. The disordered stretch occupies residues 819–850 (PKKAGKEKARKTAPRVAVRGKSRSTPGTRVKH). Positions 821-840 (KAGKEKARKTAPRVAVRGKS) are enriched in basic residues. Residues 841–850 (RSTPGTRVKH) are compositionally biased toward polar residues.

The protein belongs to the peptidase S16 family. In terms of assembly, homohexamer. Organized in a ring with a central cavity.

The protein resides in the cytoplasm. The enzyme catalyses Hydrolysis of proteins in presence of ATP.. In terms of biological role, ATP-dependent serine protease that mediates the selective degradation of mutant and abnormal proteins as well as certain short-lived regulatory proteins. Required for cellular homeostasis and for survival from DNA damage and developmental changes induced by stress. Degrades polypeptides processively to yield small peptide fragments that are 5 to 10 amino acids long. Binds to DNA in a double-stranded, site-specific manner. The sequence is that of Lon protease from Xanthomonas oryzae pv. oryzae (strain KACC10331 / KXO85).